The primary structure comprises 381 residues: Tafazzin (381 aa).

Topologically, residues 1-25 (MSFRDVLERGDEFLEAYPRRSPLWR) are mitochondrial intermembrane. An intramembrane segment occupies 26 to 47 (FLSYSTSLLTFGVSKLLLFTCY). At 48–381 (NVKLNGFEKL…PEGKPKGKDD (334 aa)) the chain is on the mitochondrial intermembrane side. The short motif at 77–82 (HMSMVD) is the HXXXXD motif element. A required for membrane insertion region spans residues 215–232 (LEATKPPIVVPIFATGFE).

Belongs to the taffazin family.

It localises to the mitochondrion outer membrane. The protein localises to the mitochondrion inner membrane. The enzyme catalyses 1'-[1,2-diacyl-sn-glycero-3-phospho],3'-[1-acyl-sn-glycero-3-phospho]-glycerol + a 1,2-diacyl-sn-glycero-3-phosphocholine = a cardiolipin + a 1-acyl-sn-glycero-3-phosphocholine. It catalyses the reaction 1,2-di-(9Z,12Z-octadecadienoyl)-sn-glycero-3-phosphocholine + 1'-[1,2-di-(9Z,12Z-octadecadienoyl)-sn-glycero-3-phospho]-3'-[1-(9Z,12Z-octadecadienoyl)-sn-glycero-3-phospho]-glycerol = 1-(9Z,12Z)-octadecadienoyl-sn-glycero-3-phosphocholine + 1',3'-bis-[1,2-di-(9Z,12Z-octadecadienoyl)-sn-glycero-3-phospho]-glycerol. It carries out the reaction 1'-[1,2-di-(9Z-octadecenoyl)-sn-glycero-3-phospho]-3'-[1-(9Z-octadecenoyl)-2-hexadecanoyl-sn-glycero-3-phospho]-glycerol + 1-hexadecanoyl-sn-glycero-3-phosphocholine = 1'-[1,2-di-(9Z-octadecenoyl)-sn-glycero-3-phospho]-3'-[1-(9Z-octadecenoyl)-sn-glycero-3-phospho]-glycerol + 1,2-dihexadecanoyl-sn-glycero-3-phosphocholine. The catalysed reaction is 1'-[1,2-di-(9Z-octadecenoyl)-sn-glycero-3-phospho]-3'-[1-(9Z-octadecenoyl)-2-(9Z-hexadecenoyl)-sn-glycero-3-phospho]-glycerol + 1-(9Z-hexadecenoyl)-sn-glycero-3-phosphocholine = 1,2-di-(9Z-hexadecenoyl)-sn-glycero-3-phosphocholine + 1'-[1,2-di-(9Z-octadecenoyl)-sn-glycero-3-phospho]-3'-[1-(9Z-octadecenoyl)-sn-glycero-3-phospho]-glycerol. The enzyme catalyses 1',3'-bis[1,2-di-(9Z-octadecenoyl)-sn-glycero-3-phospho]-glycerol + 1-(9Z-octadecenoyl)-sn-glycero-3-phosphocholine = 1'-[1,2-di-(9Z-octadecenoyl)-sn-glycero-3-phospho]-3'-[1-(9Z-octadecenoyl)-sn-glycero-3-phospho]-glycerol + 1,2-di-(9Z-octadecenoyl)-sn-glycero-3-phosphocholine. It catalyses the reaction 1'-[1,2-di-(9Z-octadecenoyl)-sn-glycero-3-phospho]-3'-[1-(9Z-octadecenoyl)-2-(9Z,12Z-octadecadienoyl)-sn-glycero-3-phospho]-glycerol + 1-(9Z,12Z)-octadecadienoyl-sn-glycero-3-phosphocholine = 1,2-di-(9Z,12Z-octadecadienoyl)-sn-glycero-3-phosphocholine + 1'-[1,2-di-(9Z-octadecenoyl)-sn-glycero-3-phospho]-3'-[1-(9Z-octadecenoyl)-sn-glycero-3-phospho]-glycerol. It carries out the reaction 1'-[1,2-di-(9Z-octadecenoyl)-sn-glycero-3-phospho]-3'-[1-(9Z-octadecenoyl)-2-(9Z-hexadecenoyl)-sn-glycero-3-phospho]-glycerol + 1-hexadecanoyl-sn-glycero-3-phosphocholine = 1-hexadecanoyl-2-(9Z-hexadecenoyl)-sn-glycero-3-phosphocholine + 1'-[1,2-di-(9Z-octadecenoyl)-sn-glycero-3-phospho]-3'-[1-(9Z-octadecenoyl)-sn-glycero-3-phospho]-glycerol. The catalysed reaction is 1'-[1,2-di-(9Z-octadecenoyl)-sn-glycero-3-phospho]-3'-[1-(9Z-octadecenoyl)-2-hexadecanoyl-sn-glycero-3-phospho]-glycerol + 1-(9Z-hexadecenoyl)-sn-glycero-3-phosphocholine = 1-(9Z-hexadecenoyl)-2-hexadecanoyl-sn-glycero-3-phosphocholine + 1'-[1,2-di-(9Z-octadecenoyl)-sn-glycero-3-phospho]-3'-[1-(9Z-octadecenoyl)-sn-glycero-3-phospho]-glycerol. The enzyme catalyses 2 1'-[1,2-diacyl-sn-glycero-3-phospho],3'-[1-acyl-sn-glycero-3-phospho]-glycerol = 1',3'-bis-[1-acyl-sn-glycero-3-phospho]-glycerol + a cardiolipin. It catalyses the reaction 2 1'-[1,2-di-(9Z-octadecenoyl)-sn-glycero-3-phospho]-3'-[1-(9Z-octadecenoyl)-sn-glycero-3-phospho]-glycerol = 1',3'-bis-[1-(9Z-octadecenoyl)-sn-glycero-3-phospho]-glycerol + 1',3'-bis[1,2-di-(9Z-octadecenoyl)-sn-glycero-3-phospho]-glycerol. It carries out the reaction 1,2-di-(9Z-hexadecenoyl)-sn-glycero-3-phosphocholine + 1-hexadecanoyl-sn-glycero-3-phosphocholine = 1-hexadecanoyl-2-(9Z-hexadecenoyl)-sn-glycero-3-phosphocholine + 1-(9Z-hexadecenoyl)-sn-glycero-3-phosphocholine. The catalysed reaction is 1'-[1,2-di-(9Z,12Z-octadecadienoyl)-sn-glycero-3-phospho]-3'-[1-(9Z,12Z-octadecadienoyl)-sn-glycero-3-phospho]-glycerol + 1,2-di-(9Z-octadecenoyl)-sn-glycero-3-phosphocholine = 1'-[1,2-di-(9Z,12Z-octadecadienoyl)-sn-glycero-3-phospho]-3'-[1-(9Z,12Z-octadecadienoyl)-2-(9Z-octadecenoyl)-sn-glycero-3-phospho]-glycerol + 1-(9Z-octadecenoyl)-sn-glycero-3-phosphocholine. The protein operates within phospholipid metabolism. Its function is as follows. Acyltransferase required to remodel newly synthesized phospholipid cardiolipin (1',3'-bis-[1,2-diacyl-sn-glycero-3-phospho]-glycerol or CL), a key component of the mitochondrial inner membrane, with tissue specific acyl chains necessary for adequate mitochondrial function. Its role in cellular physiology is to improve mitochondrial performance. CL is critical for the coassembly of lipids and proteins in mitochondrial membranes, for instance, remodeling of the acyl groups of CL in the mitochondrial inner membrane affects the assembly and stability of respiratory chain complex IV and its supercomplex forms. Catalyzes the transacylation between phospholipids and lysophospholipids, with the highest rate being between phosphatidylcholine (1,2-diacyl-sn-glycero-3-phosphocholine or PC) and CL. Catalyzes both 1-acyl-sn-glycero-3-phosphocholine (lysophosphatidylcholine or LPC) reacylation and PC-CL transacylation, that means, it exchanges acyl groups between CL and PC by a combination of forward and reverse transacylations. Also catalyzes transacylations between other phospholipids such as phosphatidylethanolamine (1,2-diacyl-sn-glycero-3-phosphoethanolamine or PE) and CL, between PC and PE, and between PC and phosphatidate (1,2-diacyl-sn-glycero-3-phosphate or PA), although at lower rate. Not regiospecific, it transfers acyl groups into any of the sn-1 and sn-2 positions of the monolysocardiolipin (MLCL), which is an important prerequisite for uniformity and symmetry in CL acyl distribution. Cannot transacylate dilysocardiolipin (DLCL), thus, the role of MLCL is limited to that of an acyl acceptor. CoA-independent, it can reshuffle molecular species within a single phospholipid class. Redistributes fatty acids between MLCL, CL, and other lipids, which prolongs the half-life of CL. Its action is completely reversible, which allows for cyclic changes, such as fission and fusion or bending and flattening of the membrane. Hence, by contributing to the flexibility of the lipid composition, it plays an important role in the dynamics of mitochondria membranes. Essential for the final stage of spermatogenesis, spermatid individualization. Required for the initiation of mitophagy. The polypeptide is Tafazzin (TAZ1) (Saccharomyces cerevisiae (strain ATCC 204508 / S288c) (Baker's yeast)).